The chain runs to 534 residues: Inorganic phosphate transporter 1-4 (534 aa).

The Cytoplasmic segment spans residues 1–24 (MAREQLQVLNALDVAKTQWYHFTA). A helical membrane pass occupies residues 25 to 45 (IIIAGMGFFTDAYDLFCISLV). Residues 46 to 70 (TKLLGRIYYHVEGAQKPGTLPPNVA) lie on the Extracellular side of the membrane. Residues 71–91 (AAVNGVAFCGTLAGQLFFGWL) form a helical membrane-spanning segment. Over 92-99 (GDKLGRKK) the chain is Cytoplasmic. A helical transmembrane segment spans residues 100-120 (VYGMTLMVMVLCSIASGLSFG). Topologically, residues 121–131 (HEPKAVMATLC) are extracellular. A helical transmembrane segment spans residues 132 to 152 (FFRFWLGFGIGGDYPLSATIM). Residues 153–161 (SEYANKKTR) are Cytoplasmic-facing. A helical transmembrane segment spans residues 162-182 (GAFVSAVFAMQGFGIMAGGIF). The Extracellular segment spans residues 183–211 (AIIISSAFEAKFPSPAYADDALGSTIPQA). Residues 212 to 232 (DLVWRIILMAGAIPAAMTYYS) form a helical membrane-spanning segment. The Cytoplasmic portion of the chain corresponds to 233 to 293 (RSKMPETARY…GLFSKEFMSR (61 aa)). The chain crosses the membrane as a helical span at residues 294–314 (HGLHLLGTTSTWFLLDIAFYS). The Extracellular segment spans residues 315–349 (QNLFQKDIFSAIGWIPPAQSMNAIQEVFKIARAQT). The helical transmembrane segment at 350–370 (LIALCSTVPGYWFTVAFIDVI) threads the bilayer. Residues 371–372 (GR) are Cytoplasmic-facing. The helical transmembrane segment at 373–393 (FAIQMMGFFFMTVFMFALAIP) threads the bilayer. The Extracellular segment spans residues 394–403 (YNHWTHKENR). Residues 404-424 (IGFVIMYSLTFFFANFGPNAT) form a helical membrane-spanning segment. At 425–442 (TFVVPAEIFPARFRSTCH) the chain is on the cytoplasmic side. Residues 443–463 (GISAASGKLGAMVGAFGFLYL) form a helical membrane-spanning segment. Over 464–484 (AQNPDKDKTDAGYPPGIGVRN) the chain is Extracellular. A helical membrane pass occupies residues 485–505 (SLIVLGVVNFLGILFTFLVPE). Topologically, residues 506-534 (SKGKSLEEMSGENEDNENSNNDSRTVPIV) are cytoplasmic. A disordered region spans residues 512–534 (EEMSGENEDNENSNNDSRTVPIV). Phosphoserine is present on residues serine 524 and serine 528.

The protein belongs to the major facilitator superfamily. Phosphate:H(+) symporter (TC 2.A.1.9) family. Interacts with NLA. Ubiquitinated by NLA. Ubiquitination of PHT1-4 leads to its degradation by the proteasome. Mostly expressed in roots, in tissues connecting the lateral roots to the primary root. Also present in flowers, in senescing anther filaments and in the abscission zone at the base of siliques. Expressed in hydathodes and axillary buds, and in some senescing leaves. After Pi starvation, localized in all cells of undifferentiated root segments, including root tips and root hairs, and in the epidermis, cortex and stellar regions of mature root segments.

Its subcellular location is the cell membrane. High-affinity transporter for external inorganic phosphate. Acts as a H(+):phosphate symporter in both low- and high-Pi conditions. Confers sensitivity to arsenate. In Arabidopsis thaliana (Mouse-ear cress), this protein is Inorganic phosphate transporter 1-4 (PHT1-4).